Reading from the N-terminus, the 179-residue chain is ATP synthase subunit delta (179 aa).

The protein belongs to the ATPase delta chain family. F-type ATPases have 2 components, F(1) - the catalytic core - and F(0) - the membrane proton channel. F(1) has five subunits: alpha(3), beta(3), gamma(1), delta(1), epsilon(1). F(0) has three main subunits: a(1), b(2) and c(10-14). The alpha and beta chains form an alternating ring which encloses part of the gamma chain. F(1) is attached to F(0) by a central stalk formed by the gamma and epsilon chains, while a peripheral stalk is formed by the delta and b chains.

The protein resides in the cell membrane. In terms of biological role, f(1)F(0) ATP synthase produces ATP from ADP in the presence of a proton or sodium gradient. F-type ATPases consist of two structural domains, F(1) containing the extramembraneous catalytic core and F(0) containing the membrane proton channel, linked together by a central stalk and a peripheral stalk. During catalysis, ATP synthesis in the catalytic domain of F(1) is coupled via a rotary mechanism of the central stalk subunits to proton translocation. This protein is part of the stalk that links CF(0) to CF(1). It either transmits conformational changes from CF(0) to CF(1) or is implicated in proton conduction. This chain is ATP synthase subunit delta, found in Clostridium botulinum (strain Loch Maree / Type A3).